The sequence spans 122 residues: Small ribosomal subunit protein uS13 (122 aa).

A disordered region spans residues 97–122 (PVRGQRTHTNARTRKGPARAIAGKKK).

Belongs to the universal ribosomal protein uS13 family. Part of the 30S ribosomal subunit. Forms a loose heterodimer with protein S19. Forms two bridges to the 50S subunit in the 70S ribosome.

Functionally, located at the top of the head of the 30S subunit, it contacts several helices of the 16S rRNA. In the 70S ribosome it contacts the 23S rRNA (bridge B1a) and protein L5 of the 50S subunit (bridge B1b), connecting the 2 subunits; these bridges are implicated in subunit movement. Contacts the tRNAs in the A and P-sites. The sequence is that of Small ribosomal subunit protein uS13 from Bartonella bacilliformis (strain ATCC 35685 / KC583 / Herrer 020/F12,63).